The chain runs to 259 residues: MEMMMTAAPRIAFLASTAEPAQRARQELMARYGDCSIEEADVLCALGGDGFMLRTLHRYGASGKPVYGMKLGSVGFLMNQYHDDLLERLQRAEPAKLRPLQMMAQTESGVSVESLAYNEVSLLRQTHQAAYISIDLNGQTRIDELTGDGVIVATPAGSTAYNYSAHGPILPLGSHTLALTPIAPYRPRRWRGAILKADTEIRFRVLDPYKRPVSVTADSHEIRDVVEVTIRESTEQRVTLLFDPEHNLEERIFSEQFAV.

Residue Asp-49 is the Proton acceptor of the active site. NAD(+) contacts are provided by residues 49–50 (DG), Arg-54, 118–119 (NE), Asp-148, Ala-156, 159–164 (TAYNYS), and Ala-183.

It belongs to the NAD kinase family. A divalent metal cation serves as cofactor.

The protein localises to the cytoplasm. It catalyses the reaction NAD(+) + ATP = ADP + NADP(+) + H(+). Its function is as follows. Involved in the regulation of the intracellular balance of NAD and NADP, and is a key enzyme in the biosynthesis of NADP. Catalyzes specifically the phosphorylation on 2'-hydroxyl of the adenosine moiety of NAD to yield NADP. This Xylella fastidiosa (strain 9a5c) protein is NAD kinase.